A 256-amino-acid polypeptide reads, in one-letter code: Thiazole synthase (256 aa).

The Schiff-base intermediate with DXP role is filled by Lys-95. 1-deoxy-D-xylulose 5-phosphate-binding positions include Gly-156, 182–183 (AG), and 204–205 (NT).

Belongs to the ThiG family. As to quaternary structure, homotetramer. Forms heterodimers with either ThiH or ThiS.

It localises to the cytoplasm. The catalysed reaction is [ThiS sulfur-carrier protein]-C-terminal-Gly-aminoethanethioate + 2-iminoacetate + 1-deoxy-D-xylulose 5-phosphate = [ThiS sulfur-carrier protein]-C-terminal Gly-Gly + 2-[(2R,5Z)-2-carboxy-4-methylthiazol-5(2H)-ylidene]ethyl phosphate + 2 H2O + H(+). It participates in cofactor biosynthesis; thiamine diphosphate biosynthesis. Its function is as follows. Catalyzes the rearrangement of 1-deoxy-D-xylulose 5-phosphate (DXP) to produce the thiazole phosphate moiety of thiamine. Sulfur is provided by the thiocarboxylate moiety of the carrier protein ThiS. In vitro, sulfur can be provided by H(2)S. This Idiomarina loihiensis (strain ATCC BAA-735 / DSM 15497 / L2-TR) protein is Thiazole synthase.